Consider the following 862-residue polypeptide: Protein kintoun (862 aa).

Disordered stretches follow at residues 208–229, 564–602, 626–670, and 743–854; these read KLLPPLPNVPAPGKTGSERTTK, TKREEHGEPECDEKDGSEAEKARTLQKAKRNSRKKKKER, GEGA…STMP, and RREV…QFKS. Over residues 564 to 586 the composition is skewed to basic and acidic residues; that stretch reads TKREEHGEPECDEKDGSEAEKAR. Basic residues predominate over residues 587-601; it reads TLQKAKRNSRKKKKE. Composition is skewed to basic and acidic residues over residues 748–757 and 766–785; these read RRADARRMSE and KDAHHHDDEHCSSSDQHDEK.

The protein belongs to the PIH1 family. Kintoun subfamily.

It is found in the cytoplasm. Functionally, required for cytoplasmic pre-assembly of axonemal dyneins, thereby playing a central role in motility in cilia and flagella. Involved in pre-assembly of dynein arm complexes in the cytoplasm before intraflagellar transport loads them for the ciliary compartment. This Anopheles gambiae (African malaria mosquito) protein is Protein kintoun.